The sequence spans 122 residues: Small ribosomal subunit protein uS13 (122 aa).

Positions 95–122 (NLPVRGQRTHTNARTRKGKAKPIAGKKK) are disordered.

Belongs to the universal ribosomal protein uS13 family. Part of the 30S ribosomal subunit. Forms a loose heterodimer with protein S19. Forms two bridges to the 50S subunit in the 70S ribosome.

Functionally, located at the top of the head of the 30S subunit, it contacts several helices of the 16S rRNA. In the 70S ribosome it contacts the 23S rRNA (bridge B1a) and protein L5 of the 50S subunit (bridge B1b), connecting the 2 subunits; these bridges are implicated in subunit movement. Contacts the tRNAs in the A and P-sites. The sequence is that of Small ribosomal subunit protein uS13 from Methylobacterium nodulans (strain LMG 21967 / CNCM I-2342 / ORS 2060).